A 274-amino-acid chain; its full sequence is 3',5'-cyclic adenosine monophosphate phosphodiesterase CpdA (274 aa).

Positions 21, 23, 63, 93, 163, 202, and 204 each coordinate Fe cation. AMP contacts are provided by residues histidine 23, aspartate 63, and 93–94 (NH). Histidine 204 contacts AMP.

It belongs to the cyclic nucleotide phosphodiesterase class-III family. Requires Fe(2+) as cofactor.

The enzyme catalyses 3',5'-cyclic AMP + H2O = AMP + H(+). In terms of biological role, hydrolyzes cAMP to 5'-AMP. Plays an important regulatory role in modulating the intracellular concentration of cAMP, thereby influencing cAMP-dependent processes. May coordinate responses to nutritional stress, ensuring optimal competence development. The protein is 3',5'-cyclic adenosine monophosphate phosphodiesterase CpdA of Haemophilus influenzae (strain ATCC 51907 / DSM 11121 / KW20 / Rd).